The sequence spans 335 residues: Trans-3-hydroxy-L-proline dehydratase (335 aa).

C91 serves as the catalytic Proton acceptor. Substrate is bound by residues 92–93 (GH), H222, and 256–257 (GS).

Belongs to the proline racemase family. In terms of assembly, homodimer.

It carries out the reaction trans-3-hydroxy-L-proline = 1-pyrroline-2-carboxylate + H2O. Catalyzes the dehydration of trans-3-hydroxy-L-proline (t3LHyp) to Delta(1)-pyrroline-2-carboxylate (Pyr2C). Does not possess neither proline racemase nor 4-hydroxyproline 2-epimerase activities. The polypeptide is Trans-3-hydroxy-L-proline dehydratase (Burkholderia cenocepacia (strain HI2424)).